A 704-amino-acid chain; its full sequence is ATP-dependent zinc metalloprotease FTSH 5, chloroplastic (704 aa).

The N-terminal 58 residues, 1 to 58, are a transit peptide targeting the chloroplast; it reads MATTSSNPLLLSSNFLGSQIIISAPTPKTTTKSLPFSVISRKRYQISQSEKLMKSLPS. A thylakoid-targeting transit peptide spans 59–76; sequence QAALAALLFSSSSPQALA. Residues 193 to 213 traverse the membrane as a helical segment; that stretch reads FDFIGNLLFPLLAFGGLFYLF. Residue 290-297 coordinates ATP; it reads GPPGTGKT. A Zn(2+)-binding site is contributed by H512. Residue E513 is part of the active site. H516 and D593 together coordinate Zn(2+).

In the N-terminal section; belongs to the AAA ATPase family. The protein in the C-terminal section; belongs to the peptidase M41 family. Heterohexamers with FTSH1, FTSH2 and FTSH8. Zn(2+) serves as cofactor. As to expression, ubiquitous.

The protein resides in the plastid. It localises to the chloroplast thylakoid membrane. In terms of biological role, part of a complex that function as an ATP-dependent zinc metallopeptidase. Involved in the thylakoid formation and in the removal of damaged D1 in the photosystem II, preventing cell death under high-intensity light conditions. Not involved in the degradation of the light-harvesting complex of photosystem II (LHC II) or in thermotolerance. This is ATP-dependent zinc metalloprotease FTSH 5, chloroplastic (FTSH5) from Arabidopsis thaliana (Mouse-ear cress).